The following is a 209-amino-acid chain: CASP-like protein 2A1 (209 aa).

Topologically, residues 1-38 are cytoplasmic; it reads MSKMAEEKVLAAPATVDGGMQSSGDLQASSAAAARVRP. The chain crosses the membrane as a helical span at residues 39-59; that stretch reads VETLLRAAPLGLCVAAMAIML. Topologically, residues 60–80 are extracellular; it reads RNSVTNEYGTVSYSDLGGFKY. The chain crosses the membrane as a helical span at residues 81 to 101; the sequence is LVYANGLCAAYSLASAFYIAV. Residues 102 to 109 are Cytoplasmic-facing; it reads PRPATLSR. Residues 110-130 form a helical membrane-spanning segment; it reads SWVVFLLDQVFTYLILAAGAA. Topologically, residues 131 to 163 are extracellular; that stretch reads SAELLYLAYNGDKEVTWSEACGVFGGFCRQART. The helical transmembrane segment at 164-184 threads the bilayer; the sequence is SVAITFASVACYILLSLISSY. The Cytoplasmic portion of the chain corresponds to 185 to 209; that stretch reads RLFSAYDPPQPSLGNKGVEIAAFPR.

It belongs to the Casparian strip membrane proteins (CASP) family. As to quaternary structure, homodimer and heterodimers.

The protein resides in the cell membrane. The sequence is that of CASP-like protein 2A1 from Oryza sativa subsp. indica (Rice).